A 239-amino-acid polypeptide reads, in one-letter code: Small ribosomal subunit protein uS3c (239 aa).

Positions 43–139 (IKNYIQKNRK…RFNISIEKVK (97 aa)) constitute a KH type-2 domain. A disordered region spans residues 50-74 (NRKKGSNRKIESDSSSEVITHNRKM).

It belongs to the universal ribosomal protein uS3 family. Part of the 30S ribosomal subunit.

The protein localises to the plastid. It is found in the chloroplast. The protein is Small ribosomal subunit protein uS3c (rps3) of Hordeum vulgare (Barley).